We begin with the raw amino-acid sequence, 558 residues long: MLQGFVQIALILAILVATAPLLGRYMARVFLGQSTWLDKIARPLESLIFAGSGITKHPSMGATQYVSAALISNLVMGVFVFLILMFQGSLPLNPTGLAAPSWDLALHTAISFVTNTNQQHYSGETTYTYFSQAGALGFLMFTSAATGIAVAIAFIRGLTGQAIGNFYQDLVLSITRILLPISLVGAILLLVAGVPETLAGPAQVTTLEGATQWIARGPVAHFEIIKELGENGGGFFGINSAHPFENPNNFANLLETVIMMVIPAGLIITYGIMAGNPEQGWLIFWMVFILYGILIAIAAVGEFQGNPLINQILGETQPNLEGKEVRFGWVLTALWAVSTTGTMCGAVNGMHDSLMPPGGFVTLSDLFLQIIWGGQGTGTAYLFVFLILTVFLTGLMVGRTPEFLGRKIEKREIVLASLILLIHPIAILIPTAITLAFPDTLAGISNPGFHGISQVAYEYASAAANNGSGFEGLADNTLWWNLSASFSLIAGRYVPIVALIFLADGMARKQPVPETSGTLHTDTTLFTGITAGAIIILGALTFLPILVLGPVAEAFNLV.

12 consecutive transmembrane segments (helical) span residues 2–22, 66–86, 135–155, 177–197, 253–273, 280–300, 327–347, 354–374, 378–398, 413–433, 482–502, and 528–548; these read LQGF…APLL, VSAA…ILMF, ALGF…IAFI, ILLP…VPET, LLET…YGIM, GWLI…IAAV, FGWV…CGAV, LMPP…IWGG, GTAY…LMVG, IVLA…PTAI, LSAS…LIFL, and GITA…ILVL.

It belongs to the KdpA family. In terms of assembly, the system is composed of three essential subunits: KdpA, KdpB and KdpC.

The protein resides in the cell inner membrane. Functionally, part of the high-affinity ATP-driven potassium transport (or Kdp) system, which catalyzes the hydrolysis of ATP coupled with the electrogenic transport of potassium into the cytoplasm. This subunit binds the periplasmic potassium ions and delivers the ions to the membrane domain of KdpB through an intramembrane tunnel. The polypeptide is Potassium-transporting ATPase potassium-binding subunit (Synechocystis sp. (strain ATCC 27184 / PCC 6803 / Kazusa)).